Reading from the N-terminus, the 177-residue chain is von Ebner gland protein 2 (177 aa).

The N-terminal stretch at 1–18 is a signal peptide; the sequence is MKALLLTFSLSLLAALQA. An intrachain disulfide couples C80 to C172.

It belongs to the calycin superfamily. Lipocalin family. As to quaternary structure, homodimer.

It localises to the secreted. Functionally, could play a role in taste reception. Could be necessary for the concentration and delivery of sapid molecules in the gustatory system. In Rattus norvegicus (Rat), this protein is von Ebner gland protein 2 (Vegp2).